The chain runs to 443 residues: Exodeoxyribonuclease 7 large subunit (443 aa).

It belongs to the XseA family. As to quaternary structure, heterooligomer composed of large and small subunits.

It localises to the cytoplasm. The enzyme catalyses Exonucleolytic cleavage in either 5'- to 3'- or 3'- to 5'-direction to yield nucleoside 5'-phosphates.. Functionally, bidirectionally degrades single-stranded DNA into large acid-insoluble oligonucleotides, which are then degraded further into small acid-soluble oligonucleotides. This Legionella pneumophila (strain Lens) protein is Exodeoxyribonuclease 7 large subunit.